The sequence spans 341 residues: Ketol-acid reductoisomerase (NADP(+)) (341 aa).

Residues leucine 3 to threonine 184 enclose the KARI N-terminal Rossmann domain. NADP(+) is bound by residues phenylalanine 26–glutamine 29, serine 54, and aspartate 84–glutamine 87. Residue histidine 109 is part of the active site. Glycine 135 contributes to the NADP(+) binding site. In terms of domain architecture, KARI C-terminal knotted spans threonine 185 to isoleucine 330. Residues aspartate 193, glutamate 197, glutamate 229, and glutamate 233 each coordinate Mg(2+). Serine 254 contributes to the substrate binding site.

The protein belongs to the ketol-acid reductoisomerase family. Mg(2+) is required as a cofactor.

The catalysed reaction is (2R)-2,3-dihydroxy-3-methylbutanoate + NADP(+) = (2S)-2-acetolactate + NADPH + H(+). It catalyses the reaction (2R,3R)-2,3-dihydroxy-3-methylpentanoate + NADP(+) = (S)-2-ethyl-2-hydroxy-3-oxobutanoate + NADPH + H(+). Its pathway is amino-acid biosynthesis; L-isoleucine biosynthesis; L-isoleucine from 2-oxobutanoate: step 2/4. It participates in amino-acid biosynthesis; L-valine biosynthesis; L-valine from pyruvate: step 2/4. Functionally, involved in the biosynthesis of branched-chain amino acids (BCAA). Catalyzes an alkyl-migration followed by a ketol-acid reduction of (S)-2-acetolactate (S2AL) to yield (R)-2,3-dihydroxy-isovalerate. In the isomerase reaction, S2AL is rearranged via a Mg-dependent methyl migration to produce 3-hydroxy-3-methyl-2-ketobutyrate (HMKB). In the reductase reaction, this 2-ketoacid undergoes a metal-dependent reduction by NADPH to yield (R)-2,3-dihydroxy-isovalerate. This is Ketol-acid reductoisomerase (NADP(+)) from Helicobacter hepaticus (strain ATCC 51449 / 3B1).